A 523-amino-acid chain; its full sequence is Keratin, type II cytoskeletal 71 (523 aa).

Positions 1–129 are head; it reads MSRQFTCKSG…DPEIQKVRAQ (129 aa). A coil 1A region spans residues 130-165; that stretch reads EREQIKALNNKFASFIDKVRFLEQQNQVLETKWELL. Residues 130-443 enclose the IF rod domain; the sequence is EREQIKALNN…KLLESEECRM (314 aa). The tract at residues 166 to 184 is linker 1; sequence QQLDLNNCKNNLEPILEGY. The tract at residues 185 to 276 is coil 1B; sequence ISNLRKQLET…CLFEAEITQI (92 aa). The tract at residues 277-300 is linker 12; that stretch reads QSHISDMSVILSMDNNRNLDLDSI. A coil 2 region spans residues 301-439; that stretch reads IDEVRTQYEE…ATYRKLLESE (139 aa). The tract at residues 440–523 is tail; the sequence is ECRMSGEFPS…LSAPSKKTSR (84 aa). The tract at residues 492–523 is disordered; that stretch reads GGEGRSRGSANDYKDTLGKGSSLSAPSKKTSR. Over residues 493-508 the composition is skewed to basic and acidic residues; that stretch reads GEGRSRGSANDYKDTL. Residues 510–523 show a composition bias toward polar residues; that stretch reads KGSSLSAPSKKTSR.

This sequence belongs to the intermediate filament family. As to quaternary structure, heterodimer of a type I and a type II keratin. Associates with KRT16 and/or KRT17. Highly expressed in hair follicles from scalp. Specifically expressed in the inner root sheath (IRS) of the hair follicle. Present in the all 3 IRS layers: the cuticle, the Henle and the Huxley layers. Also detected in the pseudopods of specialized Huxley cells, termed Fluegelzellen, along the area of differentiated Henle cells (at protein level).

The protein resides in the cytoplasm. It is found in the cytoskeleton. Functionally, plays a central role in hair formation. Essential component of keratin intermediate filaments in the inner root sheath (IRS) of the hair follicle. The sequence is that of Keratin, type II cytoskeletal 71 (KRT71) from Homo sapiens (Human).